We begin with the raw amino-acid sequence, 73 residues long: Conotoxin im23b (73 aa).

The N-terminal stretch at 1-22 (MIMRMTLTLFVLVVMTAASASG) is a signal peptide. The propeptide occupies 23–28 (DALTEA). Intrachain disulfides connect Cys-34/Cys-41, Cys-45/Cys-55, and Cys-56/Cys-71.

This sequence belongs to the conotoxin K superfamily. In terms of tissue distribution, expressed by the venom duct.

The protein localises to the secreted. Functionally, neurotoxin that induces excitatory symptoms in mice following intracranial administration. No symptoms are observed after intraperitoneal and intravenous (tail vein) injections. In Conus imperialis (Imperial cone), this protein is Conotoxin im23b.